The following is a 404-amino-acid chain: Probable eukaryotic initiation factor 4A (404 aa).

The tract at residues 1 to 28 (MAQQGKVEPQDQDSFLDDQPGIRPIPSF) is disordered. Positions 26 to 54 (PSFDDMPLHQNLLRGIYSHGFEKPSSIQQ) match the Q motif motif. The region spanning 57-231 (IVPFTRGGDI…KKFMRDPTRI (175 aa)) is the Helicase ATP-binding domain. Position 70–77 (70–77 (AQSGTGKT)) interacts with ATP. A DEAD box motif is present at residues 179-182 (DEAD). A Helicase C-terminal domain is found at 242–402 (GIKQFFIAVE…ELPVDFAAYL (161 aa)).

This sequence belongs to the DEAD box helicase family. eIF4A subfamily. EIF4F is a multi-subunit complex, the composition of which varies with external and internal environmental conditions. It is composed of at least EIF4A, EIF4E and EIF4G.

The catalysed reaction is ATP + H2O = ADP + phosphate + H(+). Its function is as follows. ATP-dependent RNA helicase which is a subunit of the eIF4F complex involved in cap recognition and is required for mRNA binding to ribosome. In the current model of translation initiation, eIF4A unwinds RNA secondary structures in the 5'-UTR of mRNAs which is necessary to allow efficient binding of the small ribosomal subunit, and subsequent scanning for the initiator codon. The protein is Probable eukaryotic initiation factor 4A of Trypanosoma brucei brucei (strain 927/4 GUTat10.1).